The sequence spans 415 residues: Queuine tRNA-ribosyltransferase accessory subunit 2 (415 aa).

Zn(2+) is bound by residues C351, C353, C356, and H382.

It belongs to the queuine tRNA-ribosyltransferase family. QTRT2 subfamily. In terms of assembly, heterodimer of a catalytic subunit QTRT1 and an accessory subunit QTRT2. Zn(2+) serves as cofactor.

The protein localises to the cytoplasm. The protein resides in the mitochondrion outer membrane. Its function is as follows. Non-catalytic subunit of the queuine tRNA-ribosyltransferase (TGT) that catalyzes the base-exchange of a guanine (G) residue with queuine (Q) at position 34 (anticodon wobble position) in tRNAs with GU(N) anticodons (tRNA-Asp, -Asn, -His and -Tyr), resulting in the hypermodified nucleoside queuosine (7-(((4,5-cis-dihydroxy-2-cyclopenten-1-yl)amino)methyl)-7-deazaguanosine). The chain is Queuine tRNA-ribosyltransferase accessory subunit 2 from Homo sapiens (Human).